We begin with the raw amino-acid sequence, 290 residues long: Outer dense fiber protein 4 (290 aa).

Ser-28 carries the post-translational modification Phosphoserine. 4 helical membrane passes run Ala-44–Phe-64, Pro-125–Thr-145, Leu-164–Phe-184, and Ile-201–Leu-221. Residues Gly-247 to Gly-290 are disordered. A compositionally biased stretch (polar residues) spans Val-252 to Glu-266.

In terms of tissue distribution, expressed in testis.

It localises to the membrane. Functionally, component of the outer dense fibers (ODF) of spermatozoa which could be involved in sperm tail structure, sperm movement and general organization of cellular cytoskeleton. In Mus musculus (Mouse), this protein is Outer dense fiber protein 4 (Odf4).